The sequence spans 359 residues: Zinc finger CCCH domain-containing protein 20 (359 aa).

3 consecutive C3H1-type zinc fingers follow at residues 75–107 (TCDHFRMYEFKVRRCARGRSHDWTECPYAHPGE), 119–145 (YSGTACPEFRKGCCKRGDACEFSHGVF), and 153–177 (RYRTQPCKDGGNCRRRVCFFAHSPD). Disordered regions lie at residues 207–226 (SISPSSNSPPVSPRGDSDSS) and 334–359 (MGRIEPDPDQGAGDTPDVGWVSDLVM).

This Arabidopsis thaliana (Mouse-ear cress) protein is Zinc finger CCCH domain-containing protein 20.